The chain runs to 1255 residues: Pre-mRNA-splicing factor ATP-dependent RNA helicase DEAH7 (1255 aa).

A disordered region spans residues 1 to 316; the sequence is MGVDPFKTTE…SDEDRSQGAE (316 aa). Residues 13 to 60 are compositionally biased toward basic and acidic residues; it reads EADKETNGGVPVKDKLTFKAPERKSRLGLDARAIEKKDNAKTEGEFKV. Residues 109–137 show a composition bias toward polar residues; the sequence is AQESTVTTENAGTSDISITPRTLSCTSSY. 2 consecutive short sequence motifs (nuclear localization signal) follow at residues 144 to 153 and 172 to 191; these read RHREEHRRDR and RRRESYRQSDRDYHGEKRRR. Positions 144–219 are enriched in basic and acidic residues; sequence RHREEHRRDR…EWERSPHGDR (76 aa). Composition is skewed to low complexity over residues 220–240 and 271–290; these read GSSYSRRPQPSPSPMLAAASP and PIRASGSSIRSSSSRYGGRS. The span at 297-316 shows a compositional bias: basic and acidic residues; the sequence is REGDLTNEGHSDEDRSQGAE. The Helicase ATP-binding domain maps to 568 to 731; sequence LQVIRENQVI…FGSVPIFNIP (164 aa). Residue 581–588 coordinates ATP; it reads GETGSGKT. The DEAH box signature appears at 678 to 681; the sequence is DEAH. The Helicase C-terminal domain maps to 753–933; sequence AVKQAMTIHI…NVVLLLKSLK (181 aa). Over residues 1190–1224 the composition is skewed to basic and acidic residues; it reads LEHKKKQKEEKSGMEEEMEKLRRDQVESELRSKER. The segment at 1190–1255 is disordered; it reads LEHKKKQKEE…TFLRPKKLGL (66 aa).

It belongs to the DEAD box helicase family. DEAH subfamily. PRP16 sub-subfamily. As to quaternary structure, interacts with the Phytophthora PSR1 protein.

The protein localises to the nucleus. It catalyses the reaction ATP + H2O = ADP + phosphate + H(+). Involved in pre-mRNA splicing by mediating structural transitions of the spliceosome during the catalytic step. Facilitates expression of genes involved in auxin-mediated development including male-gametophyte transmission, apical-basal patterning of embryonic and gynoecium development, stamen development, phyllotactic flower positioning, and vascular development. Also involved in root-meristem maintenance and planar polarity of root-hair positioning. Acts as a component of RNA silencing that regulates distinct classes of endogenous small RNAs. Functions as a positive regulator of plant immunity. This is Pre-mRNA-splicing factor ATP-dependent RNA helicase DEAH7 from Arabidopsis thaliana (Mouse-ear cress).